Here is a 200-residue protein sequence, read N- to C-terminus: Nucleoside triphosphate pyrophosphatase (200 aa).

Asp-79 serves as the catalytic Proton acceptor.

Belongs to the Maf family. It depends on a divalent metal cation as a cofactor.

It localises to the cytoplasm. The catalysed reaction is a ribonucleoside 5'-triphosphate + H2O = a ribonucleoside 5'-phosphate + diphosphate + H(+). The enzyme catalyses a 2'-deoxyribonucleoside 5'-triphosphate + H2O = a 2'-deoxyribonucleoside 5'-phosphate + diphosphate + H(+). Nucleoside triphosphate pyrophosphatase. May have a dual role in cell division arrest and in preventing the incorporation of modified nucleotides into cellular nucleic acids. This Legionella pneumophila subsp. pneumophila (strain Philadelphia 1 / ATCC 33152 / DSM 7513) protein is Nucleoside triphosphate pyrophosphatase.